The sequence spans 429 residues: Histidine--tRNA ligase (429 aa).

The protein belongs to the class-II aminoacyl-tRNA synthetase family. In terms of assembly, homodimer.

The protein localises to the cytoplasm. The enzyme catalyses tRNA(His) + L-histidine + ATP = L-histidyl-tRNA(His) + AMP + diphosphate + H(+). This Stutzerimonas stutzeri (strain A1501) (Pseudomonas stutzeri) protein is Histidine--tRNA ligase.